The sequence spans 228 residues: THAP domain-containing protein 2 (228 aa).

A THAP-type zinc finger spans residues 1–80; that stretch reads MPTNCAAAGC…LKMDAVPTIF (80 aa). The HCFC1-binding motif (HBM) motif lies at 123-126; sequence EHSY.

In Homo sapiens (Human), this protein is THAP domain-containing protein 2 (THAP2).